Here is an 800-residue protein sequence, read N- to C-terminus: Nucleolar complex protein 3 homolog (800 aa).

The segment at 37 to 90 (STIKKYRKEQRKLRQAVKDAVSKKPFPLEDPKSKRPVKGMEREEEDEEDQALPL) is disordered. The span at 40-51 (KKYRKEQRKLRQ) shows a compositional bias: basic residues. Over residues 52-77 (AVKDAVSKKPFPLEDPKSKRPVKGME) the composition is skewed to basic and acidic residues. Acidic residues predominate over residues 78–90 (REEEDEEDQALPL). K333 is covalently cross-linked (Glycyl lysine isopeptide (Lys-Gly) (interchain with G-Cter in SUMO2)). The stretch at 450-489 (FKEKRKTLSRMQRKWKKAEEKLERELREAEASESTERKLK) forms a coiled coil.

The protein belongs to the CBF/MAK21 family.

The protein localises to the nucleus. Its subcellular location is the nucleolus. This Cricetulus griseus (Chinese hamster) protein is Nucleolar complex protein 3 homolog (NOC3L).